Reading from the N-terminus, the 447-residue chain is Cysteine--tRNA ligase (447 aa).

Residue C28 coordinates Zn(2+). The short motif at 30–40 is the 'HIGH' region element; that stretch reads PTVYNYIHVGN. Zn(2+) contacts are provided by C211, H236, and E240. Residues 268–272 carry the 'KMSKS' region motif; the sequence is KMSKS. K271 serves as a coordination point for ATP.

Belongs to the class-I aminoacyl-tRNA synthetase family. In terms of assembly, monomer. It depends on Zn(2+) as a cofactor.

It localises to the cytoplasm. The enzyme catalyses tRNA(Cys) + L-cysteine + ATP = L-cysteinyl-tRNA(Cys) + AMP + diphosphate. This chain is Cysteine--tRNA ligase, found in Streptococcus pneumoniae serotype 4 (strain ATCC BAA-334 / TIGR4).